We begin with the raw amino-acid sequence, 3037 residues long: MSTNPKPQRKTKRNTNRRPQDVKFPGGGQIVGGVYLLPRRGPRLGVRAARKTSERSQPRGRRQPIPKDRRSTGKSWGRPGYPWPLYRNEGLGWAGWLLSPRGSRPSWGPSDPRHKSRNLGKVIDTLTCGFADLMGYIPVVGAPVGGVARALAHGVRVLEDGINYATGNLPGCSFSIFLLALLSCISVPVSAVEVRNTSSSYMATNDCSNSSIVWQLEGAVLHTPGCVPCEKTGNKSRCWVPVTPNIAINQPGALTKGLRAHIDVIVMSATLCSALYVGDVCGALMIAAQVVVVSPQHHHFVQECNCSIYPGKITGHRMAWDMMMNWSPTTTMLLAYLVRIPEVVLDIITGGHWGVMFGLAYFSMQGAWAKVVVILLLTAGVEASTYTTGAVVGRSTHLFTSMFSLGSQQRVQLIHTNGSWHINRTALNCNDSLETGFLAALFYTSSFNSSGCPERLAACRSIESFRIGWGSLEYEESVTNDADMRPYCWHYPPRPCGIVPARTVCGPVYCFTPSPVVVGTTDRAGAPTYNWGENETDVFLLNSTRPPKGAWFGCTWMNGTGFTKTCGAPPCRIRKDFNASEDLLCPTDCFRKHPGATYIKCGAGPWLTPRCLVDYPYRLWHYPCTVNYTIYKVRMFVGGIEHRLQAACNFTRGDRCNLEDRDRSQLSPLLHSTTEWAILPCSYTDLPALSTGLLHLHQNIVDVQYLYGLSPAITKYVVKWEWVVLLFLLLADARVCACLWMLLLLGQAEAALEKLVILHAASAASSNGLLYFILFFVAAWCIKGRAVPMVTYTLLGCWSFVLLLMALPHQAYALDAAEQGQIGMALLIAITAFTITPAYKILLSRCLWWTCYMLVLAEALIQDWIPPLQARGGRDGVIWAMTMFYPGVVFDITKWLLAILGPGYLFRAAVMRTPYFVRANALLRMCALVKQLAGGKYVQVALITLGKWTGTYIYDHLSPMSDWAADGLRDLAVAVEPIVFSPMERKVIVWGAETTACGDIIHGLPVSARLGQEVLLGPADGYTSKGWRLLAPITAYAQQTRGLLSAIVVSMTGRDKTDQAGEIQVLSTVTQSFLGTSISGVLWTVFHGAGNKTLAGSRGPVTQMYSSAEGDLVGWPSPPGTRSLEPCTCGAVDLYLVTRNADVIPARRRGDRRGALLSPRPLSSLKGSSGGPVLCPRGHAVGIFRAAVCSRGVAKSIDFIPVESLDVVTRSPNFTDNSTPPAVPQTYQVGYLHAPTGSGKSTKVPAAYAAQGYKVLVLNPSVAATLGFGAYMSKAYGINPNIRTGVRTVTTGDAITYSTYGKFLADGGCSGGAYDVIICDECHSVDSTTILGIGTVLDQAETAGVRLTVLATATPPGSVTTPHPNIEEVALGHEGEIPFYGKAIPLSAIKGGRHLIFCHSKKKCDELAVALRGMGLNAVAYYRGLDVSIIPTQGDVVVVATDALMTGYTGDFDSVIDCNVAVTQVVDFSLDPTFTITTQTVPQDSVSRSQRRGRTGRGRLGIYRYVSSGERASGMFDTVVLCECYDAGAAWYELTPAETTVRLRAYFNTPGLPVCQDHLEFWEAVFTGLTHIDAHFLSQTKQAGEGFPYLVAYQATVCARAKAPPPSWDVMWKCLIRLKPTLVGPTPLLYRLGSVTNEVTLTHPVTKYIATCMQADLEIMTSTWVLAGGVLAAVAAYCLATGCVSIIGRIHVNQKTIIAPDKEVLYEAFDEMEECASRTALIEEGHRIAEMLKSKIQGLMQQASKQAQGVQPAVQATWPKLEQFWAKHMWNFISGIQYLAGLSTLPGNPAVASMMSFSAALTSPLSTSTTILLNIMGGWLASQIAPPAGATGFVVSGLVGAAVGSIGLGKILVDVLAGYGAGISGALVAFKIMSGEKPSVEDVVNLLPAILSPGALVVGVICAAILRRHVGQGEGAVQWMNRLIAFASRGNHVAPTHYVAESDASQRVTQLLGSLTITSLLRRLHQWITEDCPVPCSGSWLRDVWDWVCSILIDFKNWLSAKLFPRLPGIPFISCQKGYRGTWAGTGIMTTRCPCGANITGNVRLGTMRISGPKTCLNTWQGTFPINCYTEGSCVPKPAPNFKTAIWRVAASEYAEVTQHDSHAYVTGLTADNLKVPCQLPCPEFFSWVDGVQIHRFAPTPKAFMRDEVSFSVGLNSYVVGSQLPCEPEPDTEVLASMLTDPSHITAEAAARRLARGSPPSAASSSASQLSAPSLRATCTTHAKCPDIDMVDANLFCWCTMGGNMTRIESESKVLMVDSFDPVVDKEDEREPSIPSEYLLPKSRFPPALPPWARPDYNPPLLETWKRPDYQPPVVAGCALPPPGTTPVPPPRRRRAVVLDQSNVGEALKELAIKSFGCPPPSGDPGHSTGGGTTGETSKSPPDEPDDSEAGSVSSMPPLEGEPGDPDLEPEQVEHPAPPQEGGAAPGSDSGSWSTCSDVDDSVVCCSMSYSWTGALITPCSPEEEKLPINPLSNSLLRYHNKVYCTTSRSASQRAKKVTFDRVQLLDSHYESVLKDVKQAATKVSAKLLSIEEACALTPPHSARSKYGFGAKEVRSLSRRAVDHIKSVWEDLLEDHCSPIDTTIMAKNEVFCVDPTKGGKKPARLIVYPDLGVRVCEKMALYDITQKLPVAVMGQSYGFQYSPAQRVDFLLQAWKEKKTPMGFSYDTRCFDSTVTERDIRTEESIYLSCSLPEEARTAIHSLTERLYVGGPMTNSKGQSCGYRRCRASGVLTTSMGNTLTCYVKAKAACNAAGIVAPTMLVCGDDLVVISESQGVEEDERNLRVFTEAMTRYSAPPGDPPKAEYDLELITSCSSNVSVALDPRGRRRYYLTRDPTTPLARAAWETARHSPVNSWLGNIIQYAPTVWVRMVLMTHFFSVLMAQDTLDQDLNFEMYGAVYSVSPLDLPAIIERLHGLEAFSLHSYSPHELTRVAAALRKLGAPPLRAWKSRARAVRASLISRGGSAATCGRYLFNWAVRTKLKLTPLPAARLLDLSSWFTVSAGGGDIYHSVSRARPRLLLLGLLLLCVGVGIFLLPAR.

At S2 the chain carries N-acetylserine; by host. An interaction with STAT1 region spans residues 2–23 (STNPKPQRKTKRNTNRRPQDVK). Residues 2–58 (STNPKPQRKTKRNTNRRPQDVKFPGGGQIVGGVYLLPRRGPRLGVRAARKTSERSQP) are interaction with EIF2AK2/PKR. The segment at 2–59 (STNPKPQRKTKRNTNRRPQDVKFPGGGQIVGGVYLLPRRGPRLGVRAARKTSERSQPR) is interaction with DDX3X. The tract at residues 2 to 75 (STNPKPQRKT…PKDRRSTGKS (74 aa)) is disordered. The Cytoplasmic segment spans residues 2-168 (STNPKPQRKT…EDGINYATGN (167 aa)). 2 short sequence motifs (nuclear localization signal) span residues 5 to 13 (PKPQRKTKR) and 38 to 43 (PRRGPR). Basic residues predominate over residues 7–16 (PQRKTKRNTN). The segment covering 32–47 (GGVYLLPRRGPRLGVR) has biased composition (low complexity). A Phosphoserine; by host modification is found at S53. 2 short sequence motifs (nuclear localization signal) span residues 58–64 (PRGRRQP) and 66–71 (PKDRRS). Phosphoserine; by host is present on residues S99 and S116. The tract at residues 112–152 (PRHKSRNLGKVIDTLTCGFADLMGYIPVVGAPVGGVARALA) is important for endoplasmic reticulum and mitochondrial localization. An interaction with APOA2 region spans residues 122 to 173 (VIDTLTCGFADLMGYIPVVGAPVGGVARALAHGVRVLEDGINYATGNLPGCS). The segment at 164–167 (YATG) is important for lipid droplets localization. A helical membrane pass occupies residues 169 to 189 (LPGCSFSIFLLALLSCISVPV). A propeptide spans 178–191 (LLALLSCISVPVSA) (ER anchor for the core protein, removed in mature form by host signal peptidase). Over 190-358 (SAVEVRNTSS…TGGHWGVMFG (169 aa)) the chain is Lumenal. Residues N196, N209, and N234 are each glycosylated (N-linked (GlcNAc...) asparagine; by host). The segment at 265–296 (IVMSATLCSALYVGDVCGALMIAAQVVVVSPQ) is important for fusion. N-linked (GlcNAc...) asparagine; by host glycosylation occurs at N305. The chain crosses the membrane as a helical span at residues 359–379 (LAYFSMQGAWAKVVVILLLTA). The Lumenal portion of the chain corresponds to 380-729 (GVEASTYTTG…WEWVVLLFLL (350 aa)). An HVR1 region spans residues 385 to 412 (TYTTGAVVGRSTHLFTSMFSLGSQQRVQ). 3 N-linked (GlcNAc...) (high mannose) asparagine; by host glycosylation sites follow: N417, N423, and N430. Disulfide bonds link C429/C554, C452/C459, C488/C496, and C505/C510. An N-linked (GlcNAc...) asparagine; by host glycan is attached at N448. The segment at 475–480 (EESVTN) is HVR2. Positions 482–495 (ADMRPYCWHYPPRP) are CD81-binding 1. An N-linked (GlcNAc...) asparagine; by host glycan is attached at N534. The tract at residues 546-553 (PPKGAWFG) is CD81-binding 2. The N-linked (GlcNAc...) asparagine; by host glycan is linked to N558. Cystine bridges form between C566–C571, C585–C589, C601–C624, and C611–C648. N627 and N649 each carry an N-linked (GlcNAc...) (high mannose) asparagine; by host glycan. A disulfide bridge connects residues C656 and C681. The PKR/eIF2-alpha phosphorylation homology domain (PePHD) stretch occupies residues 664-675 (SQLSPLLHSTTE). A helical membrane pass occupies residues 730-750 (LADARVCACLWMLLLLGQAEA). The Lumenal portion of the chain corresponds to 751 to 761 (ALEKLVILHAA). Residues 762-782 (SAASSNGLLYFILFFVAAWCI) form a helical membrane-spanning segment. The Cytoplasmic portion of the chain corresponds to 783–786 (KGRA). Residues 787-807 (VPMVTYTLLGCWSFVLLLMAL) traverse the membrane as a helical segment. At 808-817 (PHQAYALDAA) the chain is on the lumenal side. A helical membrane pass occupies residues 818 to 838 (EQGQIGMALLIAITAFTITPA). At 839–885 (YKILLSRCLWWTCYMLVLAEALIQDWIPPLQARGGRDGVIWAMTMFY) the chain is on the cytoplasmic side. A helical transmembrane segment spans residues 886 to 906 (PGVVFDITKWLLAILGPGYLF). Positions 905–1030 (LFRAAVMRTP…GYTSKGWRLL (126 aa)) constitute a Peptidase C18 domain. Residues 907-932 (RAAVMRTPYFVRANALLRMCALVKQL) are Lumenal-facing. The protease NS2-3 stretch occupies residues 908-1210 (AAVMRTPYFV…PVESLDVVTR (303 aa)). Residue C926 is the site of S-palmitoyl cysteine; by host attachment. A helical membrane pass occupies residues 933–953 (AGGKYVQVALITLGKWTGTYI). The interval 933-953 (AGGKYVQVALITLGKWTGTYI) is interaction with host SCPS1. The Cytoplasmic portion of the chain corresponds to 954–1661 (YDHLSPMSDW…CMQADLEIMT (708 aa)). Catalysis depends on for protease NS2 activity; shared with dimeric partner residues H956, E976, and C997. Residues 1031–1212 (APITAYAQQT…ESLDVVTRSP (182 aa)) form the Peptidase S29 domain. Catalysis depends on charge relay system; for serine protease NS3 activity residues H1087 and D1111. The Zn(2+) site is built by C1127 and C1129. The Charge relay system; for serine protease NS3 activity role is filled by S1169. C1175 and H1179 together coordinate Zn(2+). The region spanning 1221-1373 (PAVPQTYQVG…PNIEEVALGH (153 aa)) is the Helicase ATP-binding domain. Residue 1234–1241 (APTGSGKS) coordinates ATP. Mg(2+) contacts are provided by S1241 and E1321. The short motif at 1320 to 1323 (DECH) is the DECH box element. Residues 1490-1502 (QRRGRTGRGRLGI) form an RNA-binding region. Residues 1662–1682 (STWVLAGGVLAAVAAYCLATG) traverse the membrane as a helical segment. An NS3-binding region spans residues 1683 to 1694 (CVSIIGRIHVNQ). Residues 1683-1809 (CVSIIGRIHV…ALTSPLSTST (127 aa)) are Cytoplasmic-facing. The helical transmembrane segment at 1810 to 1830 (TILLNIMGGWLASQIAPPAGA) threads the bilayer. Residues 1831–1832 (TG) lie on the Lumenal side of the membrane. The helical transmembrane segment at 1833-1853 (FVVSGLVGAAVGSIGLGKILV) threads the bilayer. Residue D1854 is a topological domain, cytoplasmic. The helical transmembrane segment at 1855 to 1875 (VLAGYGAGISGALVAFKIMSG) threads the bilayer. The Lumenal portion of the chain corresponds to 1876–1885 (EKPSVEDVVN). The helical transmembrane segment at 1886 to 1906 (LLPAILSPGALVVGVICAAIL) threads the bilayer. At 1907–1976 (RRHVGQGEGA…WITEDCPVPC (70 aa)) the chain is on the cytoplasmic side. C1976 is lipidated: S-palmitoyl cysteine; by host. The stretch at 1977–2006 (SGSWLRDVWDWVCSILIDFKNWLSAKLFPR) is an intramembrane region. The Cytoplasmic segment spans residues 2007–3016 (LPGIPFISCQ…YHSVSRARPR (1010 aa)). C2015, C2033, C2035, and C2056 together coordinate Zn(2+). The FKBP8-binding stretch occupies residues 2124–2212 (EFFSWVDGVQ…ASSSASQLSA (89 aa)). The tract at residues 2124–2336 (EFFSWVDGVQ…PVPPPRRRRA (213 aa)) is transcriptional activation. The interval 2139-2143 (PTPKA) is interaction with non-structural protein 4A. The interaction with host SKP2 stretch occupies residues 2193 to 2464 (RLARGSPPSA…ALITPCSPEE (272 aa)). 6 positions are modified to phosphoserine; by host: S2198, S2201, S2205, S2208, S2211, and S2214. Positions 2214 to 2253 (SLRATCTTHAKCPDIDMVDANLFCWCTMGGNMTRIESESK) are ISDR. An interaction with EIF2AK2/PKR region spans residues 2214–2279 (SLRATCTTHA…REPSIPSEYL (66 aa)). The segment at 2253–2310 (KVLMVDSFDPVVDKEDEREPSIPSEYLLPKSRFPPALPPWARPDYNPPLLETWKRPDY) is NS4B-binding. Residues 2303 to 2381 (ETWKRPDYQP…GTTGETSKSP (79 aa)) are V3. The SH3-binding motif lies at 2326-2329 (TPVP). The Nuclear localization signal motif lies at 2331–2339 (PRRRRAVVL). A Glycyl lysine isopeptide (Lys-Gly) (interchain with G-Cter in ubiquitin) cross-link involves residue K2354. Residues 2354–2434 (KSFGCPPPSG…APGSDSGSWS (81 aa)) form a disordered region. The segment covering 2402-2411 (EPGDPDLEPE) has biased composition (acidic residues). Phosphoserine; by host is present on residues S2475 and S2488. The 119-residue stretch at 2660-2778 (PMGFSYDTRC…ISESQGVEED (119 aa)) folds into the RdRp catalytic domain. The Mg(2+) site is built by D2666, D2764, and D2765. The chain crosses the membrane as a helical span at residues 3017–3037 (LLLLGLLLLCVGVGIFLLPAR).

This sequence belongs to the hepacivirus polyprotein family. As to quaternary structure, homooligomer. Interacts with E1 (via C-terminus). Interacts with the non-structural protein 5A. Interacts (via N-terminus) with host STAT1 (via SH2 domain); this interaction results in decreased STAT1 phosphorylation and ubiquitin-mediated proteasome-dependent STAT1 degradation, leading to decreased IFN-stimulated gene transcription. Interacts with host STAT3; this interaction constitutively activates STAT3. Interacts with host LTBR receptor. Interacts with host TNFRSF1A receptor and possibly induces apoptosis. Interacts with host HNRPK. Interacts with host YWHAE. Interacts with host UBE3A/E6AP. Interacts with host DDX3X. Interacts with host APOA2. Interacts with host RXRA protein. Interacts with host SP110 isoform 3/Sp110b; this interaction sequesters the transcriptional corepressor SP110 away from the nucleus. Interacts with host CREB3 nuclear transcription protein; this interaction triggers cell transformation. Interacts with host ACY3. Interacts with host C1QR1. Interacts with host RBM24; this interaction, which enhances the interaction of the mature core protein with 5'-UTR, may inhibit viral translation and favor replication. Interacts with host EIF2AK2/PKR; this interaction induces the autophosphorylation of EIF2AK2. Part of the viral assembly initiation complex composed of NS2, E1, E2, NS3, NS4A, NS5A and the mature core protein. In terms of assembly, forms a heterodimer with envelope glycoprotein E2. Interacts with mature core protein. Interacts with protease NS2. The heterodimer E1/E2 interacts with host CLDN1; this interaction plays a role in viral entry into host cell. Interacts with host SPSB2 (via C-terminus). Part of the viral assembly initiation complex composed of NS2, E1, E2, NS3, NS4A, NS5A and the mature core protein. Interacts with host NEURL3; this interaction prevents E1 binding to glycoprotein E2. Forms a heterodimer with envelope glycoprotein E1. Interacts with host CD81 and SCARB1 receptors; these interactions play a role in viral entry into host cell. Interacts with host EIF2AK2/PKR; this interaction inhibits EIF2AK2 and probably allows the virus to evade the innate immune response. Interacts with host CD209/DC-SIGN and CLEC4M/DC-SIGNR. Interact with host SPCS1; this interaction is essential for viral particle assembly. Interacts with protease NS2. The heterodimer E1/E2 interacts with host CLDN1; this interaction plays a role in viral entry into host cell. Part of the viral assembly initiation complex composed of NS2, E1, E2, NS3, NS4A, NS5A and the mature core protein. Interacts with host SLC3A2/4F2hc; the interaction may facilitate viral entry into host cell. Interacts with human PLSCR1. As to quaternary structure, homohexamer. Homoheptamer. Interacts with protease NS2. In terms of assembly, homodimer. Interacts with host SPCS1; this interaction is essential for viral particle assembly. Interacts with envelope glycoprotein E1. Interacts with envelope glycoprotein E2. Interacts with viroporin p7. Interacts with serine protease/helicase NS3. Part of the replication complex composed of NS2, NS3, NS4A, NS4B, NS5A and the RNA-directed RNA polymerase embedded in an ER-derived membranous web. Part of the viral assembly initiation complex composed of NS2, E1, E2, NS3, NS4A, NS5A and the mature core protein. Interacts with protease NS2. Interacts with non-structural protein 4A; this interaction stabilizes the folding of NS3 serine protease. NS3-NS4A interaction is essential for NS3 activation and allows membrane anchorage of the latter. NS3/NS4A complex also prevents phosphorylation of host IRF3, thus preventing the establishment of dsRNA induced antiviral state. Interacts with host MAVS; this interaction leads to the cleavage and inhibition of host MAVS. Interacts with host TICAM1; this interaction leads to the cleavage and inhibition of host TICAM1. Interacts with host TANK-binding kinase/TBK1; this interaction results in the inhibition of the association between TBK1 and IRF3, which leads to the inhibition of IRF3 activation. Interacts with host RBM24. Part of the replication complex composed of NS2, NS3, NS4A, NS4B, NS5A and the RNA-directed RNA polymerase embedded in an ER-derived membranous web. Part of the viral assembly initiation complex composed of NS2, E1, E2, NS3, NS4A, NS5A and the mature core protein. As to quaternary structure, interacts with NS3 serine protease; this interaction stabilizes the folding of NS3 serine protease. NS3-NS4A interaction is essential for NS3 activation and allows membrane anchorage of the latter. Interacts with non-structural protein 5A (via N-terminus). Part of the replication complex composed of NS2, NS3, NS4A, NS4B, NS5A and the RNA-directed RNA polymerase embedded in an ER-derived membranous web. Part of the viral assembly initiation complex composed of NS2, E1, E2, NS3, NS4A, NS5A and the mature core protein. In terms of assembly, homomultimer. Interacts with non-structural protein NS5A. Interacts with host PLA2G4C; this interaction likely initiates the recruitment of replication complexes to lipid droplets. Interacts with host STING; this interaction disrupts the interaction between STING and TBK1 thereby suppressing the interferon signaling. Part of the replication complex composed of NS2, NS3, NS4A, NS4B, NS5A and the RNA-directed RNA polymerase embedded in an ER-derived membranous web. Monomer. Homodimer; dimerization is required for RNA-binding. Interacts with the mature core protein. Interacts (via N-terminus) with non-structural protein 4A. Interacts with non-structural protein 4B. Interacts (via region D2) with RNA-directed RNA polymerase. Part of the viral assembly initiation complex composed of NS2, E1, E2, NS3, NS4A, NS5A and the mature core protein. Part of the replication complex composed of NS2, NS3, NS4A, NS4B, NS5A and the RNA-directed RNA polymerase embedded in an ER-derived membranous web. Interacts with host GRB2. Interacts with host BIN1. Interacts with host PIK3R1. Interacts with host SRCAP. Interacts with host FKBP8. Interacts (via C-terminus) with host VAPB (via MSP domain). Interacts with host EIF2AK2/PKR; this interaction leads to disruption of EIF2AK2 dimerization by NS5A and probably allows the virus to evade the innate immune response. Interacts (via N-terminus) with host PACSIN2 (via N-terminus); this interaction attenuates protein kinase C alpha-mediated phosphorylation of PACSIN2 by disrupting the interaction between PACSIN2 and PRKCA. Interacts (via N-terminus) with host SRC kinase (via SH2 domain). Interacts with most Src-family kinases. Interacts with host IFI27 and SKP2; promotes the ubiquitin-mediated proteasomal degradation of NS5A. Interacts with host GPS2. Interacts with host TNFRSF21; this interaction allows the modulation by the virus of JNK, p38 MAPK, STAT3, and Akt signaling pathways in a DR6-dependent manner. Interacts (via N-terminus) with host CIDEB (via N-terminus); this interaction seems to regulate the association of HCV particles with APOE. Interacts with host CHKA/Choline Kinase-alpha; CHKA bridges host PI4KA and NS5A and potentiates NS5A-stimulated PI4KA activity, which then facilitates the targeting of the ternary complex to the ER for viral replication. Interacts with host SPSB2 (via C-terminus); this interaction targets NS5A for ubiquitination and degradation. Interacts with host RAB18; this interaction may promote the association of NS5A and other replicase components with lipid droplets. Interacts (via region D2) with host PPIA/CYPA; the interaction stimulates RNA-binding ability of NS5A and is dependent on the peptidyl-prolyl cis-trans isomerase activity of PPIA/CYPA. Interacts with host TRIM14; this interaction induces the degradation of NS5A. As to quaternary structure, homooligomer. Interacts with non-structural protein 5A. Interacts with host VAPB. Interacts with host PRK2/PKN2. Interacts with host HNRNPA1 and SEPT6; these interactions facilitate viral replication. Part of the replication complex composed of NS2, NS3, NS4A, NS4B, NS5A and the RNA-directed RNA polymerase. Zn(2+) serves as cofactor. It depends on Mg(2+) as a cofactor. Specific enzymatic cleavages in vivo yield mature proteins. The structural proteins, core, E1, E2 and p7 are produced by proteolytic processing by host signal peptidases. The core protein precursor is synthesized as a 23 kDa, which is retained in the ER membrane through the hydrophobic signal peptide. Cleavage by the signal peptidase releases the 21 kDa mature core protein. The cleavage of the core protein precursor occurs between aminoacids 176 and 188 but the exact cleavage site is not known. Some degraded forms of the core protein appear as well during the course of infection. The other proteins (p7, NS2, NS3, NS4A, NS4B, NS5A and NS5B) are cleaved by the viral proteases. Autoprocessing between NS2 and NS3 is mediated by the NS2 cysteine protease catalytic domain and regulated by the NS3 N-terminal domain. In terms of processing, phosphorylated by host PKC and PKA. Post-translationally, ubiquitinated; mediated by UBE3A and leading to core protein subsequent proteasomal degradation. Highly N-glycosylated. In terms of processing, palmitoylation is required for NS2/3 autoprocessing and E2 recruitment to membranes. Post-translationally, palmitoylated. This modification may play a role in its polymerization or in protein-protein interactions. Phosphorylated on serines in a basal form termed p56. p58 is a hyperphosphorylated form of p56. p56 and p58 coexist in the cell in roughly equivalent amounts. Hyperphosphorylation is dependent on the presence of NS4A. Host CSNK1A1/CKI-alpha or RPS6KB1 kinases may be responsible for NS5A phosphorylation. In terms of processing, tyrosine phosphorylation is essential for the interaction with host SRC. Post-translationally, the N-terminus is phosphorylated by host PRK2/PKN2.

Its subcellular location is the host endoplasmic reticulum membrane. The protein resides in the host mitochondrion membrane. It localises to the virion. It is found in the host cytoplasm. The protein localises to the host nucleus. Its subcellular location is the host lipid droplet. The protein resides in the virion membrane. It localises to the host mitochondrion. It is found in the host cell membrane. The protein localises to the host perinuclear region. It carries out the reaction Hydrolysis of four peptide bonds in the viral precursor polyprotein, commonly with Asp or Glu in the P6 position, Cys or Thr in P1 and Ser or Ala in P1'.. It catalyses the reaction a ribonucleoside 5'-triphosphate + H2O = a ribonucleoside 5'-diphosphate + phosphate + H(+). The enzyme catalyses ATP + H2O = ADP + phosphate + H(+). The catalysed reaction is RNA(n) + a ribonucleoside 5'-triphosphate = RNA(n+1) + diphosphate. Its activity is regulated as follows. Inhibited by the antiviral drug hexamethylene amiloride. Inhibition by amantadine appears to be genotype-dependent. Also inhibited by long-alkyl-chain iminosugar derivatives. With respect to regulation, activity is up-regulated by PRK2/PKN2-mediated phosphorylation. Packages viral RNA to form a viral nucleocapsid, and promotes virion budding. Participates in the viral particle production as a result of its interaction with the non-structural protein 5A. Binds RNA and may function as a RNA chaperone to induce the RNA structural rearrangements taking place during virus replication. Modulates viral translation initiation by interacting with viral IRES and 40S ribosomal subunit. Affects various cell signaling pathways, host immunity and lipid metabolism. Prevents the establishment of cellular antiviral state by blocking the interferon-alpha/beta (IFN-alpha/beta) and IFN-gamma signaling pathways and by blocking the formation of phosphorylated STAT1 and promoting ubiquitin-mediated proteasome-dependent degradation of STAT1. Activates STAT3 leading to cellular transformation. Regulates the activity of cellular genes, including c-myc and c-fos. May repress the promoter of p53, and sequester CREB3 and SP110 isoform 3/Sp110b in the cytoplasm. Represses cell cycle negative regulating factor CDKN1A, thereby interrupting an important check point of normal cell cycle regulation. Targets transcription factors involved in the regulation of inflammatory responses and in the immune response: suppresses TNF-induced NF-kappa-B activation, and activates AP-1. Binds to dendritic cells (DCs) via C1QR1, resulting in down-regulation of T-lymphocytes proliferation. Alters lipid metabolism by interacting with hepatocellular proteins involved in lipid accumulation and storage. Induces up-regulation of FAS promoter activity, and thereby contributes to the increased triglyceride accumulation in hepatocytes (steatosis). Functionally, forms a heterodimer with envelope glycoprotein E2, which mediates virus attachment to the host cell, virion internalization through clathrin-dependent endocytosis and fusion with host membrane. Fusion with the host cell is most likely mediated by both E1 and E2, through conformational rearrangements of the heterodimer required for fusion rather than a classical class II fusion mechanism. E1/E2 heterodimer binds host apolipoproteins such as APOB and ApoE thereby forming a lipo-viro-particle (LVP). APOE associated to the LVP allows the initial virus attachment to cell surface receptors such as the heparan sulfate proteoglycans (HSPGs), syndecan-1 (SDC1), syndecan-1 (SDC2), the low-density lipoprotein receptor (LDLR) and scavenger receptor class B type I (SCARB1). The cholesterol transfer activity of SCARB1 allows E2 exposure and binding of E2 to SCARB1 and the tetraspanin CD81. E1/E2 heterodimer binding on CD81 activates the epithelial growth factor receptor (EGFR) signaling pathway. Diffusion of the complex E1-E2-EGFR-SCARB1-CD81 to the cell lateral membrane allows further interaction with Claudin 1 (CLDN1) and occludin (OCLN) to finally trigger HCV entry. In terms of biological role, forms a heterodimer with envelope glycoprotein E1, which mediates virus attachment to the host cell, virion internalization through clathrin-dependent endocytosis and fusion with host membrane. Fusion with the host cell is most likely mediated by both E1 and E2, through conformational rearrangements of the heterodimer required for fusion rather than a classical class II fusion mechanism. The interaction between envelope glycoprotein E2 and host apolipoprotein E/APOE allows the proper assembly, maturation and infectivity of the viral particles. This interaction is probably promoted via the up-regulation of cellular autophagy by the virus. E1/E2 heterodimer binds host apolipoproteins such as APOB and APOE thereby forming a lipo-viro-particle (LVP). APOE associated to the LVP allows the initial virus attachment to cell surface receptors such as the heparan sulfate proteoglycans (HSPGs), syndecan-1 (SDC1), syndecan-1 (SDC2), the low-density lipoprotein receptor (LDLR) and scavenger receptor class B type I (SCARB1). The cholesterol transfer activity of SCARB1 allows E2 exposure and binding of E2 to SCARB1 and the tetraspanin CD81. E1/E2 heterodimer binding on CD81 activates the epithelial growth factor receptor (EGFR) signaling pathway. Diffusion of the complex E1-E2-EGFR-SCARB1-CD81 to the cell lateral membrane allows further interaction with Claudin 1 (CLDN1) and occludin (OCLN) to finally trigger HCV entry. Inhibits host EIF2AK2/PKR activation, preventing the establishment of an antiviral state. Viral ligand for CD209/DC-SIGN and CLEC4M/DC-SIGNR, which are respectively found on dendritic cells (DCs), and on liver sinusoidal endothelial cells and macrophage-like cells of lymph node sinuses. These interactions allow the capture of circulating HCV particles by these cells and subsequent facilitated transmission to permissive cells such as hepatocytes and lymphocyte subpopulations. The interaction between E2 and host amino acid transporter complex formed by SLC3A2 and SLC7A5/LAT1 may facilitate viral entry into host cell. Its function is as follows. Ion channel protein that acts as a viroporin and plays an essential role in the assembly, envelopment and secretion of viral particles. Regulates the host cell secretory pathway, which induces the intracellular retention of viral glycoproteins and favors assembly of viral particles. Creates a pore in acidic organelles and releases Ca(2+) and H(+) in the cytoplasm of infected cells, leading to a productive viral infection. High levels of cytoplasmic Ca(2+) may trigger membrane trafficking and transport of viral ER-associated proteins to viroplasms, sites of viral genome replication. This ionic imbalance induces the assembly of the inflammasome complex, which triggers the maturation of pro-IL-1beta into IL-1beta through the action of caspase-1. Targets also host mitochondria and induces mitochondrial depolarization. In addition of its role as a viroporin, acts as a lipid raft adhesion factor. Cysteine protease required for the proteolytic auto-cleavage between the non-structural proteins NS2 and NS3. The N-terminus of NS3 is required for the function of NS2 protease (active region NS2-3). Promotes the initiation of viral particle assembly by mediating the interaction between structural and non-structural proteins. Functionally, displays three enzymatic activities: serine protease with a chymotrypsin-like fold, NTPase and RNA helicase. NS3 serine protease, in association with NS4A, is responsible for the cleavages of NS3-NS4A, NS4A-NS4B, NS4B-NS5A and NS5A-NS5B. The NS3/NS4A complex prevents phosphorylation of host IRF3, thus preventing the establishment of dsRNA induced antiviral state. The NS3/NS4A complex induces host amino acid transporter component SLC3A2, thus contributing to HCV propagation. NS3 RNA helicase binds to RNA and unwinds both dsDNA and dsRNA in the 3' to 5' direction, and likely resolves RNA complicated stable secondary structures in the template strand. Binds a single ATP and catalyzes the unzipping of a single base pair of dsRNA. Inhibits host antiviral proteins TBK1 and IRF3 thereby preventing the establishment of an antiviral state. Cleaves host MAVS/CARDIF thereby preventing the establishment of an antiviral state. Cleaves host TICAM1/TRIF, thereby disrupting TLR3 signaling and preventing the establishment of an antiviral state. In terms of biological role, induces a specific membrane alteration that serves as a scaffold for the virus replication complex. This membrane alteration gives rise to the so-called ER-derived membranous web that contains the replication complex. NS4B self-interaction contributes to its function in membranous web formation. Promotes host TRIF protein degradation in a CASP8-dependent manner thereby inhibiting host TLR3-mediated interferon signaling. Disrupts the interaction between STING and TBK1 contributing to the inhibition of interferon signaling. Its function is as follows. Phosphorylated protein that is indispensable for viral replication and assembly. Both hypo- and hyperphosphorylated states are required for the viral life cycle. The hyperphosphorylated form of NS5A is an inhibitor of viral replication. Involved in RNA-binding and especially in binding to the viral genome. Zinc is essential for RNA-binding. Participates in the viral particle production as a result of its interaction with the mature viral core protein. Its interaction with host VAPB may target the viral replication complex to vesicles. Down-regulates viral IRES translation initiation. Mediates interferon resistance, presumably by interacting with and inhibiting host EIF2AK2/PKR. Prevents BIN1-induced apoptosis. Acts as a transcriptional activator of some host genes important for viral replication when localized in the nucleus. Via the interaction with host PACSIN2, modulates lipid droplet formation in order to promote virion assembly. Modulates TNFRSF21/DR6 signaling pathway for viral propagation. RNA-dependent RNA polymerase that performs primer-template recognition and RNA synthesis during viral replication. Initiates RNA transcription/replication at a flavin adenine dinucleotide (FAD), resulting in a 5'- FAD cap on viral RNAs. In this way, recognition of viral 5' RNA by host pattern recognition receptors can be bypassed, thereby evading activation of antiviral pathways. The polypeptide is Genome polyprotein (Hepatitis C virus genotype 2c (isolate BEBE1) (HCV)).